A 174-amino-acid polypeptide reads, in one-letter code: ATP synthase subunit delta (174 aa).

The protein belongs to the ATPase delta chain family. As to quaternary structure, F-type ATPases have 2 components, F(1) - the catalytic core - and F(0) - the membrane proton channel. F(1) has five subunits: alpha(3), beta(3), gamma(1), delta(1), epsilon(1). F(0) has three main subunits: a(1), b(2) and c(10-14). The alpha and beta chains form an alternating ring which encloses part of the gamma chain. F(1) is attached to F(0) by a central stalk formed by the gamma and epsilon chains, while a peripheral stalk is formed by the delta and b chains.

It localises to the cell inner membrane. F(1)F(0) ATP synthase produces ATP from ADP in the presence of a proton or sodium gradient. F-type ATPases consist of two structural domains, F(1) containing the extramembraneous catalytic core and F(0) containing the membrane proton channel, linked together by a central stalk and a peripheral stalk. During catalysis, ATP synthesis in the catalytic domain of F(1) is coupled via a rotary mechanism of the central stalk subunits to proton translocation. Functionally, this protein is part of the stalk that links CF(0) to CF(1). It either transmits conformational changes from CF(0) to CF(1) or is implicated in proton conduction. In Francisella tularensis subsp. tularensis (strain FSC 198), this protein is ATP synthase subunit delta.